Consider the following 372-residue polypeptide: Transcription factor MYB80 (372 aa).

2 consecutive HTH myb-type domains span residues 9–65 (KDNV…RPDL) and 66–116 (KHGE…KKKL). DNA-binding regions (H-T-H motif) lie at residues 37 to 61 (WRLI…TNYL) and 89 to 112 (WSVI…NTKL). Over residues 298–311 (MWSHQSLYSGSSGT) the composition is skewed to polar residues. Residues 298–347 (MWSHQSLYSGSSGTEEARRELPEKGNDSVGSSGGDDDAADDGKDSGKGAA) are disordered. The span at 312–323 (EEARRELPEKGN) shows a compositional bias: basic and acidic residues.

It is found in the nucleus. In terms of biological role, essential for tapetum development in anthers and microsporogenesis. May regulate the timing of tapetal programmed cell death (PCD) which is critical for pollen development. This Oryza sativa subsp. japonica (Rice) protein is Transcription factor MYB80.